The chain runs to 215 residues: MGKVYDWFEERLEIQAIADDISSKYVPPHVNIFYCLGGITFTSFVIQVASGFAMTFYYRPTVTEAFASVQYIMTEVNFGWLIRSVHRWSASMMVLMMILHIFRVYLTGGFKKPRELTWVTGVILSVLTVSFGVTGYSLPWDQVGYWAVKIVTGVPDAIPVIGSTVVELLRGSVSVGQSTLTRFYSLHTFVLPLLTAVFMLMHFLMIRKQGISGPL.

The chain crosses the membrane as a helical span at residues 32-52; the sequence is IFYCLGGITFTSFVIQVASGF. Position 35 (Cys-35) interacts with heme c. Heme b contacts are provided by His-86 and His-100. Transmembrane regions (helical) follow at residues 90–110, 116–136, and 186–206; these read ASMMVLMMILHIFRVYLTGGF, LTWVTGVILSVLTVSFGVTGY, and LHTFVLPLLTAVFMLMHFLMI. Heme b contacts are provided by His-187 and His-202.

This sequence belongs to the cytochrome b family. PetB subfamily. As to quaternary structure, the 4 large subunits of the cytochrome b6-f complex are cytochrome b6, subunit IV (17 kDa polypeptide, PetD), cytochrome f and the Rieske protein, while the 4 small subunits are PetG, PetL, PetM and PetN. The complex functions as a dimer. Requires heme b as cofactor. Heme c serves as cofactor.

It localises to the plastid. The protein resides in the chloroplast thylakoid membrane. Component of the cytochrome b6-f complex, which mediates electron transfer between photosystem II (PSII) and photosystem I (PSI), cyclic electron flow around PSI, and state transitions. In Chaetosphaeridium globosum (Charophycean green alga), this protein is Cytochrome b6.